The sequence spans 266 residues: Phosphatidylglycerol--prolipoprotein diacylglyceryl transferase (266 aa).

A run of 7 helical transmembrane segments spans residues 19–39, 61–81, 91–111, 125–145, 176–196, 204–224, and 237–257; these read IWGPLDIRWYGLAYIAAFAFA, LMFWGFIGVILGGRIGYTLFY, LYLFYIHEGGMSFHGGLLGVI, FLQVGDFVAPLVPMGLFFGRI, PSQLYEALLEGLLLFAVILWF, GAVSGLFLLGYGVARFIVEFF, and GMSMGQWLTLPMIILGIILMV. Residue arginine 144 participates in a 1,2-diacyl-sn-glycero-3-phospho-(1'-sn-glycerol) binding.

The protein belongs to the Lgt family.

The protein localises to the cell inner membrane. The catalysed reaction is L-cysteinyl-[prolipoprotein] + a 1,2-diacyl-sn-glycero-3-phospho-(1'-sn-glycerol) = an S-1,2-diacyl-sn-glyceryl-L-cysteinyl-[prolipoprotein] + sn-glycerol 1-phosphate + H(+). The protein operates within protein modification; lipoprotein biosynthesis (diacylglyceryl transfer). In terms of biological role, catalyzes the transfer of the diacylglyceryl group from phosphatidylglycerol to the sulfhydryl group of the N-terminal cysteine of a prolipoprotein, the first step in the formation of mature lipoproteins. In Idiomarina loihiensis (strain ATCC BAA-735 / DSM 15497 / L2-TR), this protein is Phosphatidylglycerol--prolipoprotein diacylglyceryl transferase.